We begin with the raw amino-acid sequence, 44 residues long: Photosystem I reaction center subunit IX (44 aa).

The helical transmembrane segment at 7 to 27 threads the bilayer; it reads YLSVAPVLSTLSLGFLTGFLI.

This sequence belongs to the PsaJ family.

The protein localises to the plastid membrane. May help in the organization of the PsaE and PsaF subunits. In Cuscuta gronovii (Common dodder), this protein is Photosystem I reaction center subunit IX.